A 399-amino-acid polypeptide reads, in one-letter code: Glutamyl-tRNA reductase (399 aa).

Substrate is bound by residues 45-48 (TCNR), Ser93, 98-100 (EDQ), and Gln104. Residue Cys46 is the Nucleophile of the active site. 173–178 (GAGKMG) is a binding site for NADP(+).

Belongs to the glutamyl-tRNA reductase family. Homodimer.

The enzyme catalyses (S)-4-amino-5-oxopentanoate + tRNA(Glu) + NADP(+) = L-glutamyl-tRNA(Glu) + NADPH + H(+). Its pathway is porphyrin-containing compound metabolism; protoporphyrin-IX biosynthesis; 5-aminolevulinate from L-glutamyl-tRNA(Glu): step 1/2. Its function is as follows. Catalyzes the NADPH-dependent reduction of glutamyl-tRNA(Glu) to glutamate 1-semialdehyde (GSA). The chain is Glutamyl-tRNA reductase from Methanobrevibacter smithii (strain ATCC 35061 / DSM 861 / OCM 144 / PS).